A 436-amino-acid chain; its full sequence is Trigger factor (436 aa).

A PPIase FKBP-type domain is found at 164–249 (GDTVVIDYKG…IHEIKEKQLP (86 aa)).

Belongs to the FKBP-type PPIase family. Tig subfamily.

It is found in the cytoplasm. The enzyme catalyses [protein]-peptidylproline (omega=180) = [protein]-peptidylproline (omega=0). Its function is as follows. Involved in protein export. Acts as a chaperone by maintaining the newly synthesized protein in an open conformation. Functions as a peptidyl-prolyl cis-trans isomerase. This is Trigger factor from Limosilactobacillus reuteri (strain DSM 20016) (Lactobacillus reuteri).